The following is a 294-amino-acid chain: Non-selective voltage-gated ion channel VDAC2 (294 aa).

Ala-2 carries the post-translational modification N-acetylalanine. Residues Lys-23 and Lys-31 each coordinate ATP. Lys-31 carries the post-translational modification N6-acetyllysine; alternate. Residue Lys-31 is modified to N6-succinyllysine; alternate. A Glycyl lysine isopeptide (Lys-Gly) (interchain with G-Cter in ubiquitin); alternate cross-link involves residue Lys-31. 2 beta stranded membrane-spanning segments follow: residues 37-46 and 50-58; these read LVKLDVKTKS and VEFSTSGSS. Glycyl lysine isopeptide (Lys-Gly) (interchain with G-Cter in ubiquitin) cross-links involve residues Lys-64 and Lys-72. Residues 65–75 form a beta stranded membrane-spanning segment; sequence VTGTLETKYKW. Phosphotyrosine is present on Tyr-78. The next 3 membrane-spanning stretches (beta stranded) occupy residues 80–87, 91–100, and 106–115; these read LTFTEKWN, TLGTEIAIED, and LKLTFDTTFS. At Thr-118 the chain carries Phosphothreonine. Lys-120 bears the N6-acetyllysine; alternate mark. Lys-120 participates in a covalent cross-link: Glycyl lysine isopeptide (Lys-Gly) (interchain with G-Cter in ubiquitin); alternate. Residues Lys-121 and Lys-124 each participate in a glycyl lysine isopeptide (Lys-Gly) (interchain with G-Cter in ubiquitin) cross-link. Transmembrane regions (beta stranded) follow at residues 122-131, 134-141, 148-156, and 161-169; these read SGKIKSSYKR, INLGCDVD, AIHGSAVFG, and LAGYQMTFD. A Glycyl lysine isopeptide (Lys-Gly) (interchain with G-Cter in ubiquitin) cross-link involves residue Lys-172. Beta stranded transmembrane passes span 174–186, 189–196, 200–209, 213–222, 229–238, and 242–249; these read KLTRNNFAVGYRT, FQLHTNVN, EFGGSIYQKV, LDTSVNLAWT, RFGIAAKYQL, and ASISAKVN. Ser-251 is subject to Phosphoserine. NAD(+) contacts are provided by residues 253–255 and 271–275; these read LIG and SALVD. 2 beta stranded membrane passes run 253–262 and 265–274; these read LIGVGYTQTL and GVKLTLSALV. Position 277 is an N6-acetyllysine; alternate (Lys-277). Lys-277 is covalently cross-linked (Glycyl lysine isopeptide (Lys-Gly) (interchain with G-Cter in ubiquitin); alternate). A beta stranded transmembrane segment spans residues 284–293; the sequence is HKVGLALELE. A Glycyl lysine isopeptide (Lys-Gly) (interchain with G-Cter in ubiquitin) cross-link involves residue Lys-285.

The protein belongs to the eukaryotic mitochondrial porin family. As to quaternary structure, monomer, homodimer and higher order oligomers; formation of higher order structures is necessary for scramblase activity. Interacts with ARMC12 in a TBC1D21-dependent manner. Interacts with KLC3. Interacts with SPATA33. Interacts with PPP3CC in a SPATA33-dependent manner. Post-translationally, ubiquitinated by PRKN during mitophagy, leading to its degradation and enhancement of mitophagy. Deubiquitinated by USP30. Expressed in erythrocytes (at protein level). Expressed in all tissues examined.

Its subcellular location is the mitochondrion outer membrane. The protein resides in the membrane. The enzyme catalyses chloride(in) = chloride(out). It catalyses the reaction K(+)(in) = K(+)(out). The catalysed reaction is a 1,2-diacyl-sn-glycero-3-phospho-L-serine(in) = a 1,2-diacyl-sn-glycero-3-phospho-L-serine(out). It carries out the reaction a 1,2-diacyl-sn-glycero-3-phosphocholine(in) = a 1,2-diacyl-sn-glycero-3-phosphocholine(out). The enzyme catalyses a 1,2-diacyl-sn-glycero-3-phospho-(1D-myo-inositol)(in) = a 1,2-diacyl-sn-glycero-3-phospho-(1D-myo-inositol)(out). Its function is as follows. Non-selective voltage-gated ion channel that mediates the transport of anions and cations through the mitochondrion outer membrane and plasma membrane. The channel adopts an open conformation at zero mV and a closed conformation at both positive and negative potentials. There are two populations of channels; the main that functions in a lower open-state conductance with lower ion selectivity, that switch, in a voltage-dependent manner, from the open to a low-conducting 'closed' state and the other that has a normal ion selectivity in the typical high conductance, 'open' state. Binds various lipids, including the sphingolipid ceramide, the phospholipid phosphatidylcholine, and the sterols cholesterol and oxysterol. Binding of ceramide promotes the mitochondrial outer membrane permeabilization (MOMP) apoptotic pathway. In terms of biological role, catalyzes the scrambling of phospholipids across the outer mitochondrial membrane; the mechanism is unrelated to channel activity and is capable of translocating both anionic and zwitterionic phospholipids. This is Non-selective voltage-gated ion channel VDAC2 from Homo sapiens (Human).